A 1159-amino-acid polypeptide reads, in one-letter code: ATP-dependent helicase/deoxyribonuclease subunit B (1159 aa).

8–15 (GRAGSGKT) serves as a coordination point for ATP. Residues C784, C1102, C1105, and C1111 each coordinate [4Fe-4S] cluster. A disordered region spans residues 1140–1159 (VKEDGSQVDGRTEGSDNNEG).

This sequence belongs to the helicase family. AddB/RexB type 1 subfamily. In terms of assembly, heterodimer of AddA and AddB. The cofactor is Mg(2+). [4Fe-4S] cluster serves as cofactor.

The heterodimer acts as both an ATP-dependent DNA helicase and an ATP-dependent, dual-direction single-stranded exonuclease. Recognizes the chi site generating a DNA molecule suitable for the initiation of homologous recombination. The AddB subunit has 5' -&gt; 3' nuclease activity but not helicase activity. In Caldanaerobacter subterraneus subsp. tengcongensis (strain DSM 15242 / JCM 11007 / NBRC 100824 / MB4) (Thermoanaerobacter tengcongensis), this protein is ATP-dependent helicase/deoxyribonuclease subunit B.